Here is a 366-residue protein sequence, read N- to C-terminus: Methylthioribose-1-phosphate isomerase (366 aa).

Aspartate 260 functions as the Proton donor in the catalytic mechanism.

Belongs to the eIF-2B alpha/beta/delta subunits family. MtnA subfamily.

It localises to the cytoplasm. Its subcellular location is the nucleus. It carries out the reaction 5-(methylsulfanyl)-alpha-D-ribose 1-phosphate = 5-(methylsulfanyl)-D-ribulose 1-phosphate. It participates in amino-acid biosynthesis; L-methionine biosynthesis via salvage pathway; L-methionine from S-methyl-5-thio-alpha-D-ribose 1-phosphate: step 1/6. In terms of biological role, catalyzes the interconversion of methylthioribose-1-phosphate (MTR-1-P) into methylthioribulose-1-phosphate (MTRu-1-P). The polypeptide is Methylthioribose-1-phosphate isomerase (Caenorhabditis briggsae).